We begin with the raw amino-acid sequence, 242 residues long: Invasion chromosome antigen R (242 aa).

The protein resides in the secreted. Its function is as follows. May contribute to pathogenesis, although some of its characteristics suggest it is a fossil gene. The chain is Invasion chromosome antigen R from Shigella flexneri serotype 5a (strain M90T).